Here is a 580-residue protein sequence, read N- to C-terminus: Membrane protein insertase YidC (580 aa).

6 helical membrane-spanning segments follow: residues 5-25, 259-279, 362-382, 427-447, 477-497, and 513-533; these read SVTG…FMSP, KYFV…LDGS, GLII…LSLA, LGGC…FYVF, IPMY…TVFV, and IMLY…PSGL.

The protein belongs to the OXA1/ALB3/YidC family. Type 1 subfamily. As to quaternary structure, interacts with the Sec translocase complex via SecD. Specifically interacts with transmembrane segments of nascent integral membrane proteins during membrane integration.

The protein localises to the cell inner membrane. Required for the insertion and/or proper folding and/or complex formation of integral membrane proteins into the membrane. Involved in integration of membrane proteins that insert both dependently and independently of the Sec translocase complex, as well as at least some lipoproteins. Aids folding of multispanning membrane proteins. This is Membrane protein insertase YidC from Chlorobium phaeovibrioides (strain DSM 265 / 1930) (Prosthecochloris vibrioformis (strain DSM 265)).